A 346-amino-acid chain; its full sequence is Phosphate acyltransferase (346 aa).

The protein belongs to the PlsX family. As to quaternary structure, homodimer. Probably interacts with PlsY.

It localises to the cytoplasm. The catalysed reaction is a fatty acyl-[ACP] + phosphate = an acyl phosphate + holo-[ACP]. It functions in the pathway lipid metabolism; phospholipid metabolism. Its function is as follows. Catalyzes the reversible formation of acyl-phosphate (acyl-PO(4)) from acyl-[acyl-carrier-protein] (acyl-ACP). This enzyme utilizes acyl-ACP as fatty acyl donor, but not acyl-CoA. The protein is Phosphate acyltransferase of Geotalea daltonii (strain DSM 22248 / JCM 15807 / FRC-32) (Geobacter daltonii).